The chain runs to 363 residues: uncharacterized protein (363 aa).

An N-terminal signal peptide occupies residues Met1–Ala20.

It belongs to the fimbrial protein family.

It localises to the fimbrium. Its function is as follows. Part of the yraHIJK fimbrial operon. Could contribute to adhesion to various surfaces in specific environmental niches. Increases adhesion to eukaryotic T24 bladder epithelial cells in the absence of fim operon. This is an uncharacterized protein from Escherichia coli (strain K12).